The sequence spans 138 residues: Basic phospholipase A2 homolog ammodytin L (138 aa).

An N-terminal signal peptide occupies residues 1-16; that stretch reads MRILWIVAVCLIGVEG. Intrachain disulfides connect C42–C131, C44–C60, C59–C111, C65–C138, C66–C104, C73–C97, and C91–C102. Positions 121–133 are important for membrane-damaging activities in eukaryotes and bacteria; heparin-binding; that stretch reads KKYKVYLRFKCKG.

This sequence belongs to the phospholipase A2 family. Group II subfamily. S49 sub-subfamily. Expressed by the venom gland.

It localises to the secreted. Snake venom phospholipase A2 homolog that lacks enzymatic activity. Is very active in inducing myonecrosis in vivo and shows a potent calcium-independent membrane-damaging activity in vitro, most probably by binding and incorporating in the membrane. Also acts as a presynaptic neurotoxin. A model of myotoxic mechanism has been proposed: an apo Lys49-PLA2 is activated by the entrance of a hydrophobic molecule (e.g. fatty acid) at the hydrophobic channel of the protein leading to a reorientation of a monomer. This reorientation causes a transition between 'inactive' to 'active' states, causing alignment of C-terminal and membrane-docking sites (MDoS) side-by-side and putting the membrane-disruption sites (MDiS) in the same plane, exposed to solvent and in a symmetric position for both monomers. The MDoS region stabilizes the toxin on membrane by the interaction of charged residues with phospholipid head groups. Subsequently, the MDiS region destabilizes the membrane with penetration of hydrophobic residues. This insertion causes a disorganization of the membrane, allowing an uncontrolled influx of ions (i.e. calcium and sodium), and eventually triggering irreversible intracellular alterations and cell death. The sequence is that of Basic phospholipase A2 homolog ammodytin L from Vipera ammodytes ammodytes (Western sand viper).